The primary structure comprises 248 residues: Triosephosphate isomerase (248 aa).

Asparagine 9–lysine 11 contacts substrate. Residue histidine 94 is the Electrophile of the active site. Glutamate 166 serves as the catalytic Proton acceptor. Substrate contacts are provided by residues glycine 172, serine 212, and glycine 233–glycine 234.

This sequence belongs to the triosephosphate isomerase family. Homodimer.

Its subcellular location is the cytoplasm. It carries out the reaction D-glyceraldehyde 3-phosphate = dihydroxyacetone phosphate. The protein operates within carbohydrate biosynthesis; gluconeogenesis. It participates in carbohydrate degradation; glycolysis; D-glyceraldehyde 3-phosphate from glycerone phosphate: step 1/1. In terms of biological role, involved in the gluconeogenesis. Catalyzes stereospecifically the conversion of dihydroxyacetone phosphate (DHAP) to D-glyceraldehyde-3-phosphate (G3P). The polypeptide is Triosephosphate isomerase (Clostridium acetobutylicum (strain ATCC 824 / DSM 792 / JCM 1419 / IAM 19013 / LMG 5710 / NBRC 13948 / NRRL B-527 / VKM B-1787 / 2291 / W)).